We begin with the raw amino-acid sequence, 263 residues long: Endonuclease 8 (263 aa).

Residue Pro-2 is the Schiff-base intermediate with DNA of the active site. Catalysis depends on Glu-3, which acts as the Proton donor. Lys-53 (proton donor; for beta-elimination activity) is an active-site residue. DNA contacts are provided by Gln-70, Arg-125, and Asn-169. The FPG-type zinc-finger motif lies at 229–263; that stretch reads KVFHRDGELCERCGGIIEKTTLSSRPFYWCPGCQH. Catalysis depends on Arg-253, which acts as the Proton donor; for delta-elimination activity.

Belongs to the FPG family. Requires Zn(2+) as cofactor.

The catalysed reaction is 2'-deoxyribonucleotide-(2'-deoxyribose 5'-phosphate)-2'-deoxyribonucleotide-DNA = a 3'-end 2'-deoxyribonucleotide-(2,3-dehydro-2,3-deoxyribose 5'-phosphate)-DNA + a 5'-end 5'-phospho-2'-deoxyribonucleoside-DNA + H(+). In terms of biological role, involved in base excision repair of DNA damaged by oxidation or by mutagenic agents. Acts as a DNA glycosylase that recognizes and removes damaged bases. Has a preference for oxidized pyrimidines, such as thymine glycol, 5,6-dihydrouracil and 5,6-dihydrothymine. Has AP (apurinic/apyrimidinic) lyase activity and introduces nicks in the DNA strand. Cleaves the DNA backbone by beta-delta elimination to generate a single-strand break at the site of the removed base with both 3'- and 5'-phosphates. The chain is Endonuclease 8 from Escherichia coli (strain SE11).